We begin with the raw amino-acid sequence, 158 residues long: 6,7-dimethyl-8-ribityllumazine synthase (158 aa).

Residues phenylalanine 22, 57 to 59 (SYE), and 81 to 83 (TVI) contribute to the 5-amino-6-(D-ribitylamino)uracil site. Histidine 89 serves as the catalytic Proton donor. 5-amino-6-(D-ribitylamino)uracil is bound at residue phenylalanine 114. Arginine 128 is a binding site for (2S)-2-hydroxy-3-oxobutyl phosphate.

This sequence belongs to the DMRL synthase family. In terms of assembly, forms an icosahedral capsid composed of 60 subunits, arranged as a dodecamer of pentamers.

The enzyme catalyses (2S)-2-hydroxy-3-oxobutyl phosphate + 5-amino-6-(D-ribitylamino)uracil = 6,7-dimethyl-8-(1-D-ribityl)lumazine + phosphate + 2 H2O + H(+). Its pathway is cofactor biosynthesis; riboflavin biosynthesis; riboflavin from 2-hydroxy-3-oxobutyl phosphate and 5-amino-6-(D-ribitylamino)uracil: step 1/2. Its function is as follows. Catalyzes the formation of 6,7-dimethyl-8-ribityllumazine by condensation of 5-amino-6-(D-ribitylamino)uracil with 3,4-dihydroxy-2-butanone 4-phosphate. This is the penultimate step in the biosynthesis of riboflavin. In Blochmanniella pennsylvanica (strain BPEN), this protein is 6,7-dimethyl-8-ribityllumazine synthase.